The chain runs to 92 residues: Integration host factor subunit beta (92 aa).

Belongs to the bacterial histone-like protein family. Heterodimer of an alpha and a beta chain.

This protein is one of the two subunits of integration host factor, a specific DNA-binding protein that functions in genetic recombination as well as in transcriptional and translational control. The chain is Integration host factor subunit beta from Azotobacter vinelandii (strain DJ / ATCC BAA-1303).